A 517-amino-acid polypeptide reads, in one-letter code: Serine hydroxymethyltransferase 1, mitochondrial (517 aa).

The N-terminal 31 residues, 1 to 31, are a transit peptide targeting the mitochondrion; the sequence is MAMALALRRLSSSADKPLQRLFNGGHLYSMS. Lysine 287 bears the N6-(pyridoxal phosphate)lysine mark.

This sequence belongs to the SHMT family. In terms of assembly, homotetramer. The cofactor is pyridoxal 5'-phosphate.

The protein localises to the mitochondrion. The catalysed reaction is (6R)-5,10-methylene-5,6,7,8-tetrahydrofolate + glycine + H2O = (6S)-5,6,7,8-tetrahydrofolate + L-serine. Its pathway is one-carbon metabolism; tetrahydrofolate interconversion. Functionally, catalyzes the interconversion of serine and glycine. The protein is Serine hydroxymethyltransferase 1, mitochondrial of Flaveria pringlei.